Consider the following 628-residue polypeptide: Chaperone protein DnaK (628 aa).

Thr174 carries the phosphothreonine; by autocatalysis modification. A disordered region spans residues 589 to 628 (AAGGAGPDMGAGAGPDMGAGASNGSAPYGDDVVDGDYKEV). Residues 591–605 (GGAGPDMGAGAGPDM) show a composition bias toward gly residues.

This sequence belongs to the heat shock protein 70 family.

Its function is as follows. Acts as a chaperone. This Lachnospira eligens (strain ATCC 27750 / DSM 3376 / VPI C15-48 / C15-B4) (Eubacterium eligens) protein is Chaperone protein DnaK.